We begin with the raw amino-acid sequence, 514 residues long: Bifunctional purine biosynthesis protein PurH (514 aa).

The MGS-like domain maps to 1 to 143; sequence MTRRALISVS…KNHAGVLVLV (143 aa).

Belongs to the PurH family.

It catalyses the reaction (6R)-10-formyltetrahydrofolate + 5-amino-1-(5-phospho-beta-D-ribosyl)imidazole-4-carboxamide = 5-formamido-1-(5-phospho-D-ribosyl)imidazole-4-carboxamide + (6S)-5,6,7,8-tetrahydrofolate. It carries out the reaction IMP + H2O = 5-formamido-1-(5-phospho-D-ribosyl)imidazole-4-carboxamide. Its pathway is purine metabolism; IMP biosynthesis via de novo pathway; 5-formamido-1-(5-phospho-D-ribosyl)imidazole-4-carboxamide from 5-amino-1-(5-phospho-D-ribosyl)imidazole-4-carboxamide (10-formyl THF route): step 1/1. The protein operates within purine metabolism; IMP biosynthesis via de novo pathway; IMP from 5-formamido-1-(5-phospho-D-ribosyl)imidazole-4-carboxamide: step 1/1. In Deinococcus geothermalis (strain DSM 11300 / CIP 105573 / AG-3a), this protein is Bifunctional purine biosynthesis protein PurH.